The chain runs to 267 residues: Fibroin light chain (267 aa).

The signal sequence occupies residues 1–16 (MLPFVLVLLVATSALA). N-acetylserine; in short form is present on Ser19. Cysteines 103 and 162 form a disulfide.

Silk fibroin elementary unit consists in a disulfide-linked heavy and light chain and a p25 glycoprotein in molar ratios of 6:6:1. This results in a complex of approximately 2.3 MDa. Partially N-terminally processed to yield a short form which lacks the first two residues of the long form. Post-translationally, the interchain disulfide bridge is essential for the intracellular transport and secretion of fibroin. In terms of tissue distribution, produced exclusively in the posterior (PSG) section of silk glands, which are essentially modified salivary glands.

It localises to the secreted. Its function is as follows. It is likely that the major role of L-chain is to prevent the retention of H-chain in ER by forming the disulfide linkage. In Galleria mellonella (Greater wax moth), this protein is Fibroin light chain (FIBL).